A 421-amino-acid chain; its full sequence is D-aspartate ligase (421 aa).

Positions 130-332 constitute an ATP-grasp domain; it reads YEVCEEYDLP…LARFVTEDRV (203 aa). 161–224 lines the ATP pocket; it reads PFEFPVALKP…QDFIPGDDSN (64 aa). Mg(2+) contacts are provided by D290, E304, and N306.

The cofactor is Mg(2+).

The enzyme catalyses [beta-GlcNAc-(1-&gt;4)-Mur2Ac(oyl-L-Ala-gamma-D-Glu-L-Lys-D-Ala-D-Ala)](n) + n D-aspartate + n ATP = [beta-GlcNAc-(1-&gt;4)-Mur2Ac(oyl-L-Ala-gamma-D-Glu-6-N-(beta-D-Asp)-L-Lys-D-Ala-D-Ala)]n + n ADP + n phosphate + n H(+). Its pathway is cell wall biogenesis; peptidoglycan biosynthesis. In terms of biological role, catalyzes the addition of D-aspartate onto the lysine residue in the peptidoglycan precursor UDP-MurNAc-pentapeptide. The ligation occurs between the beta-carboxylate of D-Asp and the epsilon-amino group of L-Lys. Is highly specific for D-aspartate, as L-aspartate, D-glutamate, D-alanine, D-iso-asparagine and D-malate are not substrates. In Enterococcus faecium (strain Aus0004), this protein is D-aspartate ligase.